The following is a 132-amino-acid chain: Sec-independent protein translocase protein TatB (132 aa).

The chain crosses the membrane as a helical span at residues 2–22; sequence FDGIGFMELLLIGILGLVVLG. Composition is skewed to polar residues over residues 86 to 95 and 116 to 132; these read LKQAAQSVNR and IAET…KNNG. Residues 86 to 132 form a disordered region; sequence LKQAAQSVNRPYQLDESNEQEPKIAPPQANIAETPTQSGDTHSKNNG.

This sequence belongs to the TatB family. As to quaternary structure, the Tat system comprises two distinct complexes: a TatABC complex, containing multiple copies of TatA, TatB and TatC subunits, and a separate TatA complex, containing only TatA subunits. Substrates initially bind to the TatABC complex, which probably triggers association of the separate TatA complex to form the active translocon.

It is found in the cell inner membrane. Its function is as follows. Part of the twin-arginine translocation (Tat) system that transports large folded proteins containing a characteristic twin-arginine motif in their signal peptide across membranes. Together with TatC, TatB is part of a receptor directly interacting with Tat signal peptides. TatB may form an oligomeric binding site that transiently accommodates folded Tat precursor proteins before their translocation. This Shewanella denitrificans (strain OS217 / ATCC BAA-1090 / DSM 15013) protein is Sec-independent protein translocase protein TatB.